The primary structure comprises 127 residues: Fumarate reductase subunit C (127 aa).

A run of 3 helical transmembrane segments spans residues 30–50, 67–87, and 107–127; these read ATIL…GCLV, IVVV…QTFF, and IIVL…LVLV.

It belongs to the FrdC family. In terms of assembly, part of an enzyme complex containing four subunits: a flavoprotein (FrdA), an iron-sulfur protein (FrdB), and two hydrophobic anchor proteins (FrdC and FrdD).

Its subcellular location is the cell inner membrane. Anchors the catalytic components of the fumarate reductase complex to the cell membrane, binds quinones. The polypeptide is Fumarate reductase subunit C (Photobacterium profundum (strain SS9)).